Consider the following 354-residue polypeptide: DNA repair protein rhp57 (354 aa).

Residue 100–107 participates in ATP binding; it reads GESGSGKS.

Belongs to the RecA family.

It localises to the nucleus. In terms of biological role, involved in recombination DNA repair and in the repair of gamma-ray-induced damage. This Schizosaccharomyces pombe (strain 972 / ATCC 24843) (Fission yeast) protein is DNA repair protein rhp57 (rhp57).